Reading from the N-terminus, the 331-residue chain is Laforin (331 aa).

The 124-residue stretch at 1-124 (MLFRFGVVVP…NNLVDGVYCL (124 aa)) folds into the CBM20 domain. Serine 25 is subject to Phosphoserine; by AMPK. Substrate-binding positions include tryptophan 32, lysine 87, 103–107 (GPHHD), aspartate 197, aspartate 235, and arginine 241. A Tyrosine-protein phosphatase domain is found at 156–323 (HYSRILPNIW…QQDFFQKFGK (168 aa)). Residue cysteine 266 is the Phosphocysteine intermediate of the active site. The Glucan phosphatase signature motif CXAGXGR signature appears at 266–272 (CNAGVGR). Substrate contacts are provided by residues 267-272 (NAGVGR) and tyrosine 304.

Belongs to the protein-tyrosine phosphatase family. In terms of assembly, homodimer. Interacts with itself. Interacts with PPP1R3B, PPP1R3C, PPP1R3D, HIRIP5, and EPM2AIP1. Binds glycogen and Lafora bodies. Interacts with NHLRC1/malin (via the NHL repeats). Forms a complex with NHLRC1/malin and HSP70. Interacts with PPP1R3D; in the presence of NHLC1/malin the interaction leads to ubiquitination and autophagic degradation of PPP1R3D. Interacts (via the phosphatase domain) with MAPT/Tau; the interaction dephosphorylates MAPT. Interacts with PRDM8. Polyubiquitinated by NHLRC1/malin. Post-translationally, phosphorylation on Ser-25 by AMPK affects the phosphatase activity of the enzyme and its ability to homodimerize and interact with NHLRC1, PPP1R3C or PRKAA2. In terms of tissue distribution, widely expressed.

It is found in the cytoplasm. The protein localises to the endoplasmic reticulum membrane. It localises to the cell membrane. It carries out the reaction O-phospho-L-tyrosyl-[protein] + H2O = L-tyrosyl-[protein] + phosphate. It catalyses the reaction O-phospho-L-seryl-[protein] + H2O = L-seryl-[protein] + phosphate. The catalysed reaction is O-phospho-L-threonyl-[protein] + H2O = L-threonyl-[protein] + phosphate. Plays an important role in preventing glycogen hyperphosphorylation and the formation of insoluble aggregates, via its activity as glycogen phosphatase, and by promoting the ubiquitination of proteins involved in glycogen metabolism via its interaction with the E3 ubiquitin ligase NHLRC1/malin. Dephosphorylates phosphotyrosine and synthetic substrates, such as para-nitrophenylphosphate (pNPP), and has low activity with phosphoserine and phosphothreonine substrates (in vitro). Has also been shown to dephosphorylate MAPT. Shows strong phosphatase activity towards complex carbohydrates in vitro, avoiding glycogen hyperphosphorylation which is associated with reduced branching and formation of insoluble aggregates. Forms a complex with NHLRC1/malin and HSP70, which suppresses the cellular toxicity of misfolded proteins by promoting their degradation through the ubiquitin-proteasome system (UPS). Acts as a scaffold protein to facilitate PPP1R3C/PTG ubiquitination by NHLRC1/malin. Also promotes proteasome-independent protein degradation through the macroautophagy pathway. In Rattus norvegicus (Rat), this protein is Laforin (Epm2a).